Reading from the N-terminus, the 119-residue chain is Immunoglobulin heavy variable 2-26 (119 aa).

Positions 1–19 are cleaved as a signal peptide; the sequence is MDTLCYTLLLLTTPSWVLS. A Pyrrolidone carboxylic acid modification is found at Gln20. The tract at residues 20–44 is framework-1; it reads QVTLKESGPVLVKPTETLTLTCTVS. One can recognise an Ig-like domain in the interval 20-119; it reads QVTLKESGPV…DTATYYCARI (100 aa). Cys41 and Cys116 form a disulfide bridge. Positions 45–54 are complementarity-determining-1; that stretch reads GFSLSNARMG. Residues 55-71 form a framework-2 region; it reads VSWIRQPPGKALEWLAH. The tract at residues 72–78 is complementarity-determining-2; the sequence is IFSNDEK. The segment at 79-116 is framework-3; the sequence is SYSTSLKSRLTISKDTSKSQVVLTMTNMDPVDTATYYC. The complementarity-determining-3 stretch occupies residues 117-119; that stretch reads ARI.

In terms of assembly, immunoglobulins are composed of two identical heavy chains and two identical light chains; disulfide-linked.

Its subcellular location is the secreted. The protein localises to the cell membrane. V region of the variable domain of immunoglobulin heavy chains that participates in the antigen recognition. Immunoglobulins, also known as antibodies, are membrane-bound or secreted glycoproteins produced by B lymphocytes. In the recognition phase of humoral immunity, the membrane-bound immunoglobulins serve as receptors which, upon binding of a specific antigen, trigger the clonal expansion and differentiation of B lymphocytes into immunoglobulins-secreting plasma cells. Secreted immunoglobulins mediate the effector phase of humoral immunity, which results in the elimination of bound antigens. The antigen binding site is formed by the variable domain of one heavy chain, together with that of its associated light chain. Thus, each immunoglobulin has two antigen binding sites with remarkable affinity for a particular antigen. The variable domains are assembled by a process called V-(D)-J rearrangement and can then be subjected to somatic hypermutations which, after exposure to antigen and selection, allow affinity maturation for a particular antigen. The sequence is that of Immunoglobulin heavy variable 2-26 from Homo sapiens (Human).